The following is a 350-amino-acid chain: Erythronate-4-phosphate dehydrogenase (350 aa).

Substrate is bound by residues S45 and T66. NAD(+) is bound by residues 124–125 (QV), D144, 203–205 (ASR), and D226. R205 is an active-site residue. Residue E231 is part of the active site. H248 (proton donor) is an active-site residue. G251 provides a ligand contact to NAD(+).

It belongs to the D-isomer specific 2-hydroxyacid dehydrogenase family. PdxB subfamily. As to quaternary structure, homodimer.

It localises to the cytoplasm. The enzyme catalyses 4-phospho-D-erythronate + NAD(+) = (R)-3-hydroxy-2-oxo-4-phosphooxybutanoate + NADH + H(+). The protein operates within cofactor biosynthesis; pyridoxine 5'-phosphate biosynthesis; pyridoxine 5'-phosphate from D-erythrose 4-phosphate: step 2/5. Functionally, catalyzes the oxidation of erythronate-4-phosphate to 3-hydroxy-2-oxo-4-phosphonooxybutanoate. This is Erythronate-4-phosphate dehydrogenase from Legionella pneumophila subsp. pneumophila (strain Philadelphia 1 / ATCC 33152 / DSM 7513).